The sequence spans 207 residues: Ubiquinol-cytochrome c reductase iron-sulfur subunit (207 aa).

Residues 24–44 (LVAATSVVGAVGAGYALVPFV) form a helical membrane-spanning segment. In terms of domain architecture, Rieske spans 100 to 199 (PKLVDPTSEV…HVYLNDTTIL (100 aa)). C134, H136, C162, and H165 together coordinate [2Fe-2S] cluster. C139 and C164 are joined by a disulfide.

The main subunits of complex b-c1 are: cytochrome b, cytochrome c1 and the Rieske protein. [2Fe-2S] cluster serves as cofactor.

It localises to the cell membrane. The catalysed reaction is a quinol + 2 Fe(III)-[cytochrome c](out) = a quinone + 2 Fe(II)-[cytochrome c](out) + 2 H(+)(out). Functionally, component of the ubiquinol-cytochrome c reductase complex (complex III or cytochrome b-c1 complex), which is a respiratory chain that generates an electrochemical potential coupled to ATP synthesis. The chain is Ubiquinol-cytochrome c reductase iron-sulfur subunit (petA) from Allochromatium vinosum (strain ATCC 17899 / DSM 180 / NBRC 103801 / NCIMB 10441 / D) (Chromatium vinosum).